We begin with the raw amino-acid sequence, 42 residues long: Mating-type M-specific polypeptide Mi (42 aa).

The protein localises to the cytoplasm. It is found in the nucleus. Mating type proteins are sequence specific DNA-binding proteins that act as master switches in yeast differentiation by controlling gene expression in a cell type-specific fashion. Required for meiosis, but plays no role in conjugation. In Schizosaccharomyces pombe (strain 972 / ATCC 24843) (Fission yeast), this protein is Mating-type M-specific polypeptide Mi (mat1-Mi).